The following is a 504-amino-acid chain: Lysine--tRNA ligase (504 aa).

Mg(2+) is bound by residues glutamate 414 and glutamate 421.

Belongs to the class-II aminoacyl-tRNA synthetase family. In terms of assembly, homodimer. Mg(2+) is required as a cofactor.

It localises to the cytoplasm. It catalyses the reaction tRNA(Lys) + L-lysine + ATP = L-lysyl-tRNA(Lys) + AMP + diphosphate. The sequence is that of Lysine--tRNA ligase from Photorhabdus laumondii subsp. laumondii (strain DSM 15139 / CIP 105565 / TT01) (Photorhabdus luminescens subsp. laumondii).